A 140-amino-acid polypeptide reads, in one-letter code: Small ribosomal subunit protein uS12 (140 aa).

Position 102 is a 3-methylthioaspartic acid (aspartate 102).

It belongs to the universal ribosomal protein uS12 family. In terms of assembly, part of the 30S ribosomal subunit. Contacts proteins S8 and S17. May interact with IF1 in the 30S initiation complex.

In terms of biological role, with S4 and S5 plays an important role in translational accuracy. Its function is as follows. Interacts with and stabilizes bases of the 16S rRNA that are involved in tRNA selection in the A site and with the mRNA backbone. Located at the interface of the 30S and 50S subunits, it traverses the body of the 30S subunit contacting proteins on the other side and probably holding the rRNA structure together. The combined cluster of proteins S8, S12 and S17 appears to hold together the shoulder and platform of the 30S subunit. In Bacillus anthracis (strain A0248), this protein is Small ribosomal subunit protein uS12.